The following is a 1955-amino-acid chain: Rootletin (1955 aa).

Coiled coils occupy residues 29–58 (EENR…ESIE), 162–223 (EENL…QQHT), 284–1303 (LMRK…AVES), 1368–1579 (VGVT…EELR), and 1607–1863 (RRWE…RTKG). Disordered regions lie at residues 321–341 (VTEN…DLKR), 391–451 (LTTK…KKLD), 504–551 (LKER…RSLK), 907–935 (EKLN…NEAV), and 961–998 (RDLE…QKTL). Basic and acidic residues-rich tracts occupy residues 326 to 341 (MKSE…DLKR) and 396 to 451 (GEID…KKLD). Basic and acidic residues-rich tracts occupy residues 907–931 (EKLN…ESSK), 961–982 (RDLE…KMEL), and 989–998 (EDRKKEQKTL).

This sequence belongs to the rootletin family. As to expression, expressed in head ciliated neurons.

The protein localises to the cytoplasm. Its subcellular location is the cytoskeleton. It is found in the cilium basal body. It localises to the cilium axoneme. In terms of biological role, major structural component of the ciliary rootlet, a cytoskeletal-like structure in ciliated cells which originates from the basal body at the proximal end of a cilium and extends proximally toward the cell nucleus. Required for cilia integrity and function in sensory neurons. Maintains cilia integrity, partly by modulating the assembly and transport of intraflagellar proteins along the ciliary axoneme. Required for normal mating behavior and normal responses to environmental and chemical stimuli. The chain is Rootletin from Caenorhabditis elegans.